A 331-amino-acid polypeptide reads, in one-letter code: Anthranilate phosphoribosyltransferase (331 aa).

5-phospho-alpha-D-ribose 1-diphosphate contacts are provided by residues G79, 82-83, T87, 89-92, 107-115, and A119; these read GD, NIST, and KHGNYGATS. An anthranilate-binding site is contributed by G79. S91 provides a ligand contact to Mg(2+). Position 110 (N110) interacts with anthranilate. Residue R165 coordinates anthranilate. 2 residues coordinate Mg(2+): D223 and E224.

This sequence belongs to the anthranilate phosphoribosyltransferase family. Homodimer. Mg(2+) serves as cofactor.

The enzyme catalyses N-(5-phospho-beta-D-ribosyl)anthranilate + diphosphate = 5-phospho-alpha-D-ribose 1-diphosphate + anthranilate. It participates in amino-acid biosynthesis; L-tryptophan biosynthesis; L-tryptophan from chorismate: step 2/5. In terms of biological role, catalyzes the transfer of the phosphoribosyl group of 5-phosphorylribose-1-pyrophosphate (PRPP) to anthranilate to yield N-(5'-phosphoribosyl)-anthranilate (PRA). The chain is Anthranilate phosphoribosyltransferase from Phocaeicola vulgatus (strain ATCC 8482 / DSM 1447 / JCM 5826 / CCUG 4940 / NBRC 14291 / NCTC 11154) (Bacteroides vulgatus).